We begin with the raw amino-acid sequence, 149 residues long: Calmodulin (149 aa).

Alanine 2 bears the N-acetylalanine mark. 4 consecutive EF-hand domains span residues 8–43, 44–79, 81–116, and 117–149; these read EQIAEFKEAFSLFDKDGDGTITTKELGTVMRSLGQN, PTEAELQDMINEVDADGNGTIDFPEFLTMMARKMKD, DSEEEIREAFRVFDKDGNGYISAAELRYVMTNLGEK, and LTDEXVDEMIREADIDGDGQVNYEEFVQMMTAK. The Ca(2+) site is built by aspartate 21, aspartate 23, aspartate 25, threonine 27, glutamate 32, aspartate 57, aspartate 59, asparagine 61, threonine 63, glutamate 68, aspartate 94, aspartate 96, asparagine 98, tyrosine 100, and glutamate 105. Lysine 116 carries the N6,N6,N6-trimethyllysine modification. The Ca(2+) site is built by aspartate 130, aspartate 132, aspartate 134, glutamine 136, and glutamate 141.

Belongs to the calmodulin family.

Calmodulin acts as part of a calcium signal transduction pathway by mediating the control of a large number of enzymes, ion channels, aquaporins and other proteins through calcium-binding. Calcium-binding is required for the activation of calmodulin. Among the enzymes to be stimulated by the calmodulin-calcium complex are a number of protein kinases, such as myosin light-chain kinases and calmodulin-dependent protein kinase type II (CaMK2), and phosphatases. The chain is Calmodulin (calm) from Oreochromis mossambicus (Mozambique tilapia).